The chain runs to 138 residues: RuBisCO chaperone RbcX (138 aa).

A disordered region spans residues V118–S138. Polar residues predominate over residues P122 to S138.

The protein belongs to the RbcX family. In terms of assembly, homodimer. Interacts with the exposed C-terminal peptide of RbcL via its central cleft, contacts a second RbcL monomer via its peripheral polar surface.

Its subcellular location is the carboxysome. The protein localises to the cytoplasm. Its function is as follows. An RbcL-specific chaperone. The central cleft of the RbcX homodimer (RbcX2) binds the C-terminus of an RbcL monomer, stabilizing the C-terminus and probably preventing its reassociation with chaperonin GroEL-ES. At the same time the peripheral region of RbcX2 binds a second RbcL monomer, bridging the RbcL homodimers in the correct orientation. The RbcX2(2)-bound RbcL dimers then assemble into the RbcL8 core (RbcL8-(RbcX2)8). RbcS binding triggers the release of RbcX2. This is RuBisCO chaperone RbcX from Synechocystis sp. (strain ATCC 27184 / PCC 6803 / Kazusa).